Consider the following 438-residue polypeptide: Cysteine--tRNA ligase (438 aa).

A Zn(2+)-binding site is contributed by Cys28. The 'HIGH' region signature appears at 30 to 40; that stretch reads PTVYNHLHLGN. Zn(2+) contacts are provided by Cys207, His232, and Glu236. Residues 264 to 268 carry the 'KMSKS' region motif; the sequence is KMSKS. Residue Lys267 participates in ATP binding.

It belongs to the class-I aminoacyl-tRNA synthetase family. In terms of assembly, monomer. It depends on Zn(2+) as a cofactor.

Its subcellular location is the cytoplasm. It catalyses the reaction tRNA(Cys) + L-cysteine + ATP = L-cysteinyl-tRNA(Cys) + AMP + diphosphate. This is Cysteine--tRNA ligase from Aster yellows witches'-broom phytoplasma (strain AYWB).